We begin with the raw amino-acid sequence, 320 residues long: Transmembrane protein 41 homolog (320 aa).

The segment at 20–72 is disordered; sequence GRAKALQEHSPDQVATPLLPQVPPQEQQDLNPQQQQQQQQQQQATPQKQAMSA. Over residues 43–68 the composition is skewed to low complexity; the sequence is PQEQQDLNPQQQQQQQQQQQATPQKQ. Transmembrane regions (helical) follow at residues 83-103, 141-161, 173-195, 225-242, 245-265, and 289-309; these read VIVAGIFVASLVTMCYVYAIF, VMFGVVVAYVFLQTFAIPGSL, FPIALFLICFCSALGATLCYTLS, LFNYMLFLRMTPILPNWF, LASPVIGVPLHIFALGTFCGV, and FSWTSMGILMACACASLLPGL.

The protein belongs to the TMEM41 family. As to expression, in embryos, strongly expressed in the nervous system.

The protein resides in the membrane. Functionally, required in cholinergic neurons, but not in motor neurons, for normal neurotransmitter release by motor neurons. Involved in muscle growth. This chain is Transmembrane protein 41 homolog (stas), found in Drosophila melanogaster (Fruit fly).